The chain runs to 186 residues: Small ribosomal subunit protein uS7 (186 aa).

The protein belongs to the universal ribosomal protein uS7 family. As to quaternary structure, part of the 30S ribosomal subunit.

Its function is as follows. One of the primary rRNA binding proteins, it binds directly to 16S rRNA where it nucleates assembly of the head domain of the 30S subunit. Is located at the subunit interface close to the decoding center. This chain is Small ribosomal subunit protein uS7, found in Methanococcoides burtonii (strain DSM 6242 / NBRC 107633 / OCM 468 / ACE-M).